The chain runs to 555 residues: Urocanate hydratase (555 aa).

Residues Gly-51–Gly-52, Gln-129, Gly-175–Gly-177, Glu-195, Gln-262–His-266, Tyr-272–Leu-273, and Tyr-321 contribute to the NAD(+) site. Cys-409 is an active-site residue. Gly-491 serves as a coordination point for NAD(+).

The protein belongs to the urocanase family. NAD(+) is required as a cofactor.

Its subcellular location is the cytoplasm. The enzyme catalyses 4-imidazolone-5-propanoate = trans-urocanate + H2O. The protein operates within amino-acid degradation; L-histidine degradation into L-glutamate; N-formimidoyl-L-glutamate from L-histidine: step 2/3. Its function is as follows. Catalyzes the conversion of urocanate to 4-imidazolone-5-propionate. This Xanthomonas euvesicatoria pv. vesicatoria (strain 85-10) (Xanthomonas campestris pv. vesicatoria) protein is Urocanate hydratase.